The chain runs to 757 residues: Cellulose synthase-like protein B5 (757 aa).

A run of 2 helical transmembrane segments spans residues 24–44 and 50–70; these read AVDL…ILHI and VWLL…IFTC. Residues aspartate 136 and aspartate 460 contribute to the active site. Transmembrane regions (helical) follow at residues 531-551, 572-592, 613-633, 671-691, 704-724, and 735-755; these read LAYF…YCLL, IVTL…SLGF, LFSI…GFVI, LFIP…GYLV, GSGL…LPFL, and IPLS…FFCV.

It belongs to the glycosyltransferase 2 family. Plant cellulose synthase-like B subfamily. In terms of tissue distribution, expressed in young seedlings, primarily in the vascular tissue. Expressed in the root cap.

It is found in the golgi apparatus membrane. In terms of biological role, thought to be a Golgi-localized beta-glycan synthase that polymerize the backbones of noncellulosic polysaccharides (hemicelluloses) of plant cell wall. The chain is Cellulose synthase-like protein B5 (CSLB5) from Arabidopsis thaliana (Mouse-ear cress).